Reading from the N-terminus, the 264-residue chain is Phosphonoacetaldehyde hydrolase (264 aa).

Asp9 serves as the catalytic Nucleophile. 2 residues coordinate Mg(2+): Asp9 and Ala11. The Schiff-base intermediate with substrate role is filled by Lys50. Asp183 provides a ligand contact to Mg(2+).

Belongs to the HAD-like hydrolase superfamily. PhnX family. In terms of assembly, homodimer. The cofactor is Mg(2+).

The enzyme catalyses phosphonoacetaldehyde + H2O = acetaldehyde + phosphate + H(+). Its function is as follows. Involved in phosphonate degradation. In Bacillus cereus (strain AH820), this protein is Phosphonoacetaldehyde hydrolase.